We begin with the raw amino-acid sequence, 154 residues long: SsrA-binding protein (154 aa).

It belongs to the SmpB family.

The protein resides in the cytoplasm. Its function is as follows. Required for rescue of stalled ribosomes mediated by trans-translation. Binds to transfer-messenger RNA (tmRNA), required for stable association of tmRNA with ribosomes. tmRNA and SmpB together mimic tRNA shape, replacing the anticodon stem-loop with SmpB. tmRNA is encoded by the ssrA gene; the 2 termini fold to resemble tRNA(Ala) and it encodes a 'tag peptide', a short internal open reading frame. During trans-translation Ala-aminoacylated tmRNA acts like a tRNA, entering the A-site of stalled ribosomes, displacing the stalled mRNA. The ribosome then switches to translate the ORF on the tmRNA; the nascent peptide is terminated with the 'tag peptide' encoded by the tmRNA and targeted for degradation. The ribosome is freed to recommence translation, which seems to be the essential function of trans-translation. The protein is SsrA-binding protein of Enterococcus faecalis (strain ATCC 700802 / V583).